The sequence spans 432 residues: Adenylosuccinate synthetase (432 aa).

GTP-binding positions include 12 to 18 (GDEGKGK) and 40 to 42 (GHT). Aspartate 13 functions as the Proton acceptor in the catalytic mechanism. Residues aspartate 13 and glycine 40 each contribute to the Mg(2+) site. IMP contacts are provided by residues 13 to 16 (DEGK), 38 to 41 (NAGH), threonine 131, arginine 145, glutamine 226, threonine 241, and arginine 305. Histidine 41 functions as the Proton donor in the catalytic mechanism. Residue 301-307 (ATTGRPR) participates in substrate binding. Residues arginine 307, 333–335 (KLD), and 415–417 (STG) each bind GTP.

This sequence belongs to the adenylosuccinate synthetase family. Homodimer. It depends on Mg(2+) as a cofactor.

The protein resides in the cytoplasm. It carries out the reaction IMP + L-aspartate + GTP = N(6)-(1,2-dicarboxyethyl)-AMP + GDP + phosphate + 2 H(+). The protein operates within purine metabolism; AMP biosynthesis via de novo pathway; AMP from IMP: step 1/2. Plays an important role in the de novo pathway of purine nucleotide biosynthesis. Catalyzes the first committed step in the biosynthesis of AMP from IMP. The polypeptide is Adenylosuccinate synthetase (Magnetococcus marinus (strain ATCC BAA-1437 / JCM 17883 / MC-1)).